The chain runs to 593 residues: MEMYETLGKVGEGSYGTVMKCKHKDTGRIVAIKIFYEKPEKSVNKIATREIKFLKQFRHENLVNLIEVFRQKKKIHLVFEFIDHTVLDELQHYCHGLESKRLRKYLFQILRAIEYLHNNNIIHRDIKPENILVSQSGITKLCDFGFARTLAAPGDVYTDYVATRWYRAPELVLKDTTYGKPVDIWALGCMIIEMATGNPYLPSSSDLDLLHKIVLKVGNLTPHLHNIFSKSPIFAGVVLPQVQHPKNARKKYPKLNGLLADIVHACLQIDPAERISSTDLLHHDYFTRDGFIEKFIPELRAKLLQEAKVNSFIKPKENFKENEPVRDEKKPVFTNPLLYGNPTLYGKEVDRDKRAKELKVRVIKAKGGKGDVPDLKKTESEGEHRQQGTAEDTHPTSLDRKPSVSELTNPVHPSANSDTVKEDPHSGGCMIMPPINLTSSNLLAANPSSNLSHPNSRLTERTKKRRTSSQTIGQTLSNSRQEDTGPTQVQTEKGAFNERTGQNDQIASGNKRKLNFSKCDRKEFHFPELPFTIQAKEMKGMEVKQIKVLKRESKKTDSPKIPTLLSMDSNQEKQEVFNIFPGWCKRGNLNWPS.

The 283-residue stretch at 4-286 folds into the Protein kinase domain; the sequence is YETLGKVGEG…STDLLHHDYF (283 aa). ATP is bound by residues 10-18 and K33; that span reads VGEGSYGTV. Residues 45-51 carry the [NKR]KIAxRE motif; that stretch reads KIATREI. D125 functions as the Proton acceptor in the catalytic mechanism. Position 158 is a phosphothreonine (T158). Y160 is subject to Phosphotyrosine. Residues 368–403 show a composition bias toward basic and acidic residues; it reads GKGDVPDLKKTESEGEHRQQGTAEDTHPTSLDRKPS. Residues 368–512 are disordered; that stretch reads GKGDVPDLKK…NDQIASGNKR (145 aa). Over residues 436 to 452 the composition is skewed to low complexity; that stretch reads NLTSSNLLAANPSSNLS. Composition is skewed to polar residues over residues 468–491 and 499–508; these read SSQT…QVQT and RTGQNDQIAS.

The protein belongs to the protein kinase superfamily. CMGC Ser/Thr protein kinase family. CDC2/CDKX subfamily. As to expression, highly expressed in brain, and to a lower extent in heart and testis.

It localises to the nucleus. It is found in the cytoplasm. It carries out the reaction L-seryl-[protein] + ATP = O-phospho-L-seryl-[protein] + ADP + H(+). The catalysed reaction is L-threonyl-[protein] + ATP = O-phospho-L-threonyl-[protein] + ADP + H(+). This chain is Cyclin-dependent kinase-like 3, found in Rattus norvegicus (Rat).